The following is a 186-amino-acid chain: Peptidyl-tRNA hydrolase (186 aa).

Tyr-16 provides a ligand contact to tRNA. His-21 functions as the Proton acceptor in the catalytic mechanism. TRNA contacts are provided by Tyr-60 and Asn-62.

This sequence belongs to the PTH family. As to quaternary structure, monomer.

The protein localises to the cytoplasm. It carries out the reaction an N-acyl-L-alpha-aminoacyl-tRNA + H2O = an N-acyl-L-amino acid + a tRNA + H(+). Functionally, hydrolyzes ribosome-free peptidyl-tRNAs (with 1 or more amino acids incorporated), which drop off the ribosome during protein synthesis, or as a result of ribosome stalling. Catalyzes the release of premature peptidyl moieties from peptidyl-tRNA molecules trapped in stalled 50S ribosomal subunits, and thus maintains levels of free tRNAs and 50S ribosomes. The sequence is that of Peptidyl-tRNA hydrolase from Tropheryma whipplei (strain Twist) (Whipple's bacillus).